Here is a 35-residue protein sequence, read N- to C-terminus: Photosystem II reaction center protein T (35 aa).

A helical transmembrane segment spans residues 3 to 23 (ALVYTFLLVSTLGIIFFAIFF).

It belongs to the PsbT family. As to quaternary structure, PSII is composed of 1 copy each of membrane proteins PsbA, PsbB, PsbC, PsbD, PsbE, PsbF, PsbH, PsbI, PsbJ, PsbK, PsbL, PsbM, PsbT, PsbY, PsbZ, Psb30/Ycf12, at least 3 peripheral proteins of the oxygen-evolving complex and a large number of cofactors. It forms dimeric complexes.

The protein resides in the plastid. It localises to the chloroplast thylakoid membrane. Found at the monomer-monomer interface of the photosystem II (PS II) dimer, plays a role in assembly and dimerization of PSII. PSII is a light-driven water plastoquinone oxidoreductase, using light energy to abstract electrons from H(2)O, generating a proton gradient subsequently used for ATP formation. The chain is Photosystem II reaction center protein T from Oenothera argillicola (Appalachian evening primrose).